The sequence spans 160 residues: ATP synthase subunit delta, mitochondrial (160 aa).

The N-terminal 22 residues, 1-22 (MLRSIIGKSASRSLNFVAKRSY), are a transit peptide targeting the mitochondrion.

The protein belongs to the ATPase epsilon chain family. In terms of assembly, F-type ATPases have 2 components, CF(1) - the catalytic core - and CF(0) - the membrane proton channel. CF(1) has five subunits: alpha(3), beta(3), gamma(1), delta(1), epsilon(1). CF(0) has three main subunits: a, b and c.

The protein localises to the mitochondrion. Its subcellular location is the mitochondrion inner membrane. Mitochondrial membrane ATP synthase (F(1)F(0) ATP synthase or Complex V) produces ATP from ADP in the presence of a proton gradient across the membrane which is generated by electron transport complexes of the respiratory chain. F-type ATPases consist of two structural domains, F(1) - containing the extramembraneous catalytic core, and F(0) - containing the membrane proton channel, linked together by a central stalk and a peripheral stalk. During catalysis, ATP turnover in the catalytic domain of F(1) is coupled via a rotary mechanism of the central stalk subunits to proton translocation. Part of the complex F(1) domain and of the central stalk which is part of the complex rotary element. Rotation of the central stalk against the surrounding alpha(3)beta(3) subunits leads to hydrolysis of ATP in three separate catalytic sites on the beta subunits. In Saccharomyces cerevisiae (strain ATCC 204508 / S288c) (Baker's yeast), this protein is ATP synthase subunit delta, mitochondrial (ATP16).